Reading from the N-terminus, the 550-residue chain is Cochlin (550 aa).

A signal peptide spans 1-24 (MSAAWIPALGLGVCLLLLPGPAGS). The region spanning 28–121 (APIAITCFTR…QMLSRWSASF (94 aa)) is the LCCL domain. 2 cysteine pairs are disulfide-bonded: Cys34-Cys50 and Cys54-Cys74. A glycan (N-linked (GlcNAc...) asparagine) is linked at Asn100. Residues 128-139 (SSTQEATGQAVS) are compositionally biased toward polar residues. The tract at residues 128–159 (SSTQEATGQAVSTAHPPTGKRLKKTPEKKTGN) is disordered. VWFA domains follow at residues 165–346 (DIAF…VKPL) and 367–537 (NIAF…VSDV). Asn221 carries N-linked (GlcNAc...) asparagine glycosylation.

In terms of assembly, monomer. May form homodimer. Interacts with type II collagen. Interacts with SLC44A2. Interacts with ANXA2. N-glycosylated. Post-translationally, a 50 kDa form is created by proteolytic cleavage. As to expression, expressed in inner ear structures; the cochlea and the vestibule.

It is found in the secreted. The protein localises to the extracellular space. It localises to the extracellular matrix. Its function is as follows. Plays a role in the control of cell shape and motility in the trabecular meshwork. In Homo sapiens (Human), this protein is Cochlin (COCH).